Consider the following 82-residue polypeptide: Sulfur carrier protein TusA (82 aa).

Residue Cys19 is the Cysteine persulfide intermediate of the active site.

Belongs to the sulfur carrier protein TusA family.

It is found in the cytoplasm. In terms of biological role, sulfur carrier protein which probably makes part of a sulfur-relay system. In Tolumonas auensis (strain DSM 9187 / NBRC 110442 / TA 4), this protein is Sulfur carrier protein TusA.